The chain runs to 325 residues: GMP reductase (325 aa).

Residue Cys174 is the Thioimidate intermediate of the active site. NADP(+) is bound at residue 203 to 226 (IIADGGIRTHGDIAKSIRFGATMV).

Belongs to the IMPDH/GMPR family. GuaC type 2 subfamily.

The enzyme catalyses IMP + NH4(+) + NADP(+) = GMP + NADPH + 2 H(+). Catalyzes the irreversible NADPH-dependent deamination of GMP to IMP. It functions in the conversion of nucleobase, nucleoside and nucleotide derivatives of G to A nucleotides, and in maintaining the intracellular balance of A and G nucleotides. This chain is GMP reductase, found in Helicobacter pylori (strain J99 / ATCC 700824) (Campylobacter pylori J99).